Here is a 234-residue protein sequence, read N- to C-terminus: Purine nucleoside phosphorylase DeoD-type (234 aa).

Histidine 4 lines the a purine D-ribonucleoside pocket. Phosphate-binding positions include glycine 20, arginine 24, arginine 43, and 87–90 (RVGT). A purine D-ribonucleoside is bound by residues glutamate 162, 178 to 180 (EME), and 202 to 203 (SD). Aspartate 203 functions as the Proton donor in the catalytic mechanism.

The protein belongs to the PNP/UDP phosphorylase family. In terms of assembly, homohexamer; trimer of homodimers.

The enzyme catalyses a purine D-ribonucleoside + phosphate = a purine nucleobase + alpha-D-ribose 1-phosphate. The catalysed reaction is a purine 2'-deoxy-D-ribonucleoside + phosphate = a purine nucleobase + 2-deoxy-alpha-D-ribose 1-phosphate. Catalyzes the reversible phosphorolytic breakdown of the N-glycosidic bond in the beta-(deoxy)ribonucleoside molecules, with the formation of the corresponding free purine bases and pentose-1-phosphate. The sequence is that of Purine nucleoside phosphorylase DeoD-type from Anoxybacillus flavithermus (strain DSM 21510 / WK1).